The sequence spans 446 residues: Glutamate-1-semialdehyde 2,1-aminomutase (446 aa).

At K264 the chain carries N6-(pyridoxal phosphate)lysine.

The protein belongs to the class-III pyridoxal-phosphate-dependent aminotransferase family. HemL subfamily. It depends on pyridoxal 5'-phosphate as a cofactor.

It localises to the cytoplasm. The catalysed reaction is (S)-4-amino-5-oxopentanoate = 5-aminolevulinate. It functions in the pathway porphyrin-containing compound metabolism; protoporphyrin-IX biosynthesis; 5-aminolevulinate from L-glutamyl-tRNA(Glu): step 2/2. The polypeptide is Glutamate-1-semialdehyde 2,1-aminomutase (Natronomonas pharaonis (strain ATCC 35678 / DSM 2160 / CIP 103997 / JCM 8858 / NBRC 14720 / NCIMB 2260 / Gabara) (Halobacterium pharaonis)).